The sequence spans 632 residues: DNA ligase (632 aa).

NAD(+) is bound by residues 45 to 49 (NEDYD) and 89 to 90 (SI). Catalysis depends on Lys127, which acts as the N6-AMP-lysine intermediate. NAD(+) is bound by residues Arg143, Glu174, and Lys286. Positions 374, 377, 390, and 396 each coordinate Zn(2+). Residues 561-632 (DKRIVFTGKM…EADYLSKITM (72 aa)) form the BRCT domain.

This sequence belongs to the NAD-dependent DNA ligase family. LigA subfamily. It depends on Mg(2+) as a cofactor. Mn(2+) serves as cofactor.

It carries out the reaction NAD(+) + (deoxyribonucleotide)n-3'-hydroxyl + 5'-phospho-(deoxyribonucleotide)m = (deoxyribonucleotide)n+m + AMP + beta-nicotinamide D-nucleotide.. Functionally, DNA ligase that catalyzes the formation of phosphodiester linkages between 5'-phosphoryl and 3'-hydroxyl groups in double-stranded DNA using NAD as a coenzyme and as the energy source for the reaction. It is essential for DNA replication and repair of damaged DNA. The chain is DNA ligase from Vesicomyosocius okutanii subsp. Calyptogena okutanii (strain HA).